Reading from the N-terminus, the 233-residue chain is 2-C-methyl-D-erythritol 4-phosphate cytidylyltransferase (233 aa).

This sequence belongs to the IspD/TarI cytidylyltransferase family. IspD subfamily.

It catalyses the reaction 2-C-methyl-D-erythritol 4-phosphate + CTP + H(+) = 4-CDP-2-C-methyl-D-erythritol + diphosphate. It functions in the pathway isoprenoid biosynthesis; isopentenyl diphosphate biosynthesis via DXP pathway; isopentenyl diphosphate from 1-deoxy-D-xylulose 5-phosphate: step 2/6. In terms of biological role, catalyzes the formation of 4-diphosphocytidyl-2-C-methyl-D-erythritol from CTP and 2-C-methyl-D-erythritol 4-phosphate (MEP). This is 2-C-methyl-D-erythritol 4-phosphate cytidylyltransferase from Gloeobacter violaceus (strain ATCC 29082 / PCC 7421).